We begin with the raw amino-acid sequence, 102 residues long: NADH-quinone oxidoreductase subunit K (102 aa).

The next 3 membrane-spanning stretches (helical) occupy residues 5-25 (LGHF…GIFL), 31-51 (IVLL…FVAF), and 62-82 (IFVF…LAIL).

It belongs to the complex I subunit 4L family. NDH-1 is composed of 14 different subunits. Subunits NuoA, H, J, K, L, M, N constitute the membrane sector of the complex.

The protein localises to the cell inner membrane. It carries out the reaction a quinone + NADH + 5 H(+)(in) = a quinol + NAD(+) + 4 H(+)(out). Functionally, NDH-1 shuttles electrons from NADH, via FMN and iron-sulfur (Fe-S) centers, to quinones in the respiratory chain. The immediate electron acceptor for the enzyme in this species is believed to be ubiquinone. Couples the redox reaction to proton translocation (for every two electrons transferred, four hydrogen ions are translocated across the cytoplasmic membrane), and thus conserves the redox energy in a proton gradient. The sequence is that of NADH-quinone oxidoreductase subunit K from Albidiferax ferrireducens (strain ATCC BAA-621 / DSM 15236 / T118) (Rhodoferax ferrireducens).